A 1408-amino-acid polypeptide reads, in one-letter code: TSET complex member tstA (1408 aa).

Disordered stretches follow at residues 259-347, 998-1055, and 1091-1139; these read FWPT…SIIA, QQSS…AVGS, and SSSS…TNLN. Positions 266–308 are enriched in low complexity; the sequence is NNNNNNNNQQINNNNNNNNNNNNNNNNNNNNNNNNNNNNNQNN. Polar residues predominate over residues 309–318; that stretch reads LINGISSMNL. Low complexity-rich tracts occupy residues 319 to 347 and 998 to 1051; these read SSITGTTTTTTTTGNSPITSPTSPTSIIA and QQSS…ISTS.

It belongs to the TPLATE family. As to quaternary structure, component of the TSET complex, a heterohexamer composed of tstA, tstB, tstC, tstD, tstE and tstF, which may act in plasma membrane turnover. tstA, tstB, tstC and tstD are likely to be the core complex members with tstE and tstF acting as associated scaffold proteins.

The protein is TSET complex member tstA of Dictyostelium discoideum (Social amoeba).